The following is a 65-amino-acid chain: Large ribosomal subunit protein bL35 (65 aa).

The interval 1–23 is disordered; sequence MPKMKSNRGAAKRFKRTGSGKFK. The segment covering 10 to 23 has biased composition (basic residues); that stretch reads AAKRFKRTGSGKFK.

This sequence belongs to the bacterial ribosomal protein bL35 family.

This chain is Large ribosomal subunit protein bL35, found in Acidithiobacillus ferrooxidans (strain ATCC 53993 / BNL-5-31) (Leptospirillum ferrooxidans (ATCC 53993)).